A 376-amino-acid polypeptide reads, in one-letter code: Carbohydrate sulfotransferase 14 (376 aa).

Residues 1–30 (MFPRPLTPLAAPKSAETLGRTPRRAPLGRA) are disordered. Over 1-39 (MFPRPLTPLAAPKSAETLGRTPRRAPLGRARAGLGGPPL) the chain is Cytoplasmic. Positions 18–30 (LGRTPRRAPLGRA) are enriched in low complexity. Residues 40-60 (LLPSMLMFAVIVASSGLLLMI) form a helical; Signal-anchor for type II membrane protein membrane-spanning segment. Topologically, residues 61–376 (ERGILSEMKP…PNVTKEACHQ (316 aa)) are lumenal. Residues 76-96 (PSHKGAAWSGTDPKPRGLSLD) form a disordered region. Asparagine 110 carries an N-linked (GlcNAc...) asparagine glycan. Residues 155 to 161 (PKVACSN) and 213 to 221 (RDPLERLLS) contribute to the 3'-phosphoadenylyl sulfate site. An N-linked (GlcNAc...) asparagine glycan is attached at asparagine 368.

Belongs to the sulfotransferase 2 family.

The protein localises to the golgi apparatus membrane. It catalyses the reaction dermatan + n 3'-phosphoadenylyl sulfate = dermatan 4'-sulfate + n adenosine 3',5'-bisphosphate + n H(+). Its function is as follows. Catalyzes the transfer of sulfate to position 4 of the N-acetylgalactosamine (GalNAc) residue of dermatan sulfate. Plays a pivotal role in the formation of 4-0-sulfated IdoA blocks in dermatan sulfate. Transfers sulfate to the C-4 hydroxyl of beta1,4-linked GalNAc that is substituted with an alpha-linked iduronic acid (IdoUA) at the C-3 hydroxyl. Transfers sulfate more efficiently to GalNAc residues in -IdoUA-GalNAc-IdoUA- than in -GlcUA-GalNAc-GlcUA-sequences. Has preference for partially desulfated dermatan sulfate. Addition of sulfate to GalNAc may occur immediately after epimerization of GlcUA to IdoUA. Appears to have an important role in the formation of the cerebellar neural network during postnatal brain development. The sequence is that of Carbohydrate sulfotransferase 14 (Chst14) from Mus musculus (Mouse).